The sequence spans 257 residues: Tryptophan synthase alpha chain (257 aa).

Active-site proton acceptor residues include glutamate 51 and aspartate 62.

This sequence belongs to the TrpA family. In terms of assembly, tetramer of two alpha and two beta chains.

The catalysed reaction is (1S,2R)-1-C-(indol-3-yl)glycerol 3-phosphate + L-serine = D-glyceraldehyde 3-phosphate + L-tryptophan + H2O. Its pathway is amino-acid biosynthesis; L-tryptophan biosynthesis; L-tryptophan from chorismate: step 5/5. In terms of biological role, the alpha subunit is responsible for the aldol cleavage of indoleglycerol phosphate to indole and glyceraldehyde 3-phosphate. The polypeptide is Tryptophan synthase alpha chain (Nitratidesulfovibrio vulgaris (strain ATCC 29579 / DSM 644 / CCUG 34227 / NCIMB 8303 / VKM B-1760 / Hildenborough) (Desulfovibrio vulgaris)).